Reading from the N-terminus, the 491-residue chain is Probable cytosol aminopeptidase (491 aa).

Mn(2+)-binding residues include K261 and D266. K273 is a catalytic residue. D284, D343, and E345 together coordinate Mn(2+). The active site involves R347.

The protein belongs to the peptidase M17 family. It depends on Mn(2+) as a cofactor.

The protein resides in the cytoplasm. The enzyme catalyses Release of an N-terminal amino acid, Xaa-|-Yaa-, in which Xaa is preferably Leu, but may be other amino acids including Pro although not Arg or Lys, and Yaa may be Pro. Amino acid amides and methyl esters are also readily hydrolyzed, but rates on arylamides are exceedingly low.. It catalyses the reaction Release of an N-terminal amino acid, preferentially leucine, but not glutamic or aspartic acids.. Functionally, presumably involved in the processing and regular turnover of intracellular proteins. Catalyzes the removal of unsubstituted N-terminal amino acids from various peptides. In Stenotrophomonas maltophilia (strain K279a), this protein is Probable cytosol aminopeptidase.